A 244-amino-acid chain; its full sequence is tRNA pseudouridine synthase A 2 (244 aa).

The active-site Nucleophile is the aspartate 52. Residue tyrosine 110 coordinates substrate.

Belongs to the tRNA pseudouridine synthase TruA family. Homodimer.

The catalysed reaction is uridine(38/39/40) in tRNA = pseudouridine(38/39/40) in tRNA. In terms of biological role, formation of pseudouridine at positions 38, 39 and 40 in the anticodon stem and loop of transfer RNAs. The protein is tRNA pseudouridine synthase A 2 of Clostridium perfringens (strain 13 / Type A).